A 445-amino-acid chain; its full sequence is Putative ATP-dependent RNA helicase L538 (445 aa).

Residues 14–151 (IEFMKNNRGV…AVLVNIVRGE (138 aa)) form the Helicase ATP-binding domain. An ATP-binding site is contributed by 27-34 (HSTGAGKT). A DEAH box motif is present at residues 101–104 (DEAH). The 170-residue stretch at 273–442 (KIEDIMKYII…VIDASIENNY (170 aa)) folds into the Helicase C-terminal domain.

Belongs to the DEAD box helicase family. DEAH subfamily.

The protein localises to the virion. It catalyses the reaction ATP + H2O = ADP + phosphate + H(+). The polypeptide is Putative ATP-dependent RNA helicase L538 (Acanthamoeba polyphaga mimivirus (APMV)).